A 502-amino-acid chain; its full sequence is UPF0371 protein CTC_00401 (502 aa).

It belongs to the UPF0371 family.

The polypeptide is UPF0371 protein CTC_00401 (Clostridium tetani (strain Massachusetts / E88)).